Here is a 520-residue protein sequence, read N- to C-terminus: Amine oxidase [flavin-containing] B (520 aa).

Ser-2 bears the N-acetylserine mark. The Cytoplasmic segment spans residues Ser-2–Val-489. Residue Lys-52 is modified to N6-acetyllysine. Cys-397 carries the post-translational modification S-8alpha-FAD cysteine. A helical; Anchor for type IV membrane protein transmembrane segment spans residues Pro-490–Leu-516. The Mitochondrial intermembrane portion of the chain corresponds to Leu-517–Val-520.

Belongs to the flavin monoamine oxidase family. In terms of assembly, monomer, homo- or heterodimer (containing two subunits of similar size). Each subunit contains a covalently bound flavin. Enzymatically active as monomer. It depends on FAD as a cofactor.

It is found in the mitochondrion outer membrane. It catalyses the reaction a secondary aliphatic amine + O2 + H2O = a primary amine + an aldehyde + H2O2. The catalysed reaction is (R)-adrenaline + O2 + H2O = (R)-3,4-dihydroxymandelaldehyde + methylamine + H2O2. The enzyme catalyses a primary methyl amine + O2 + H2O = an aldehyde + H2O2 + NH4(+). It carries out the reaction benzylamine + O2 + H2O = benzaldehyde + H2O2 + NH4(+). It catalyses the reaction dopamine + O2 + H2O = 3,4-dihydroxyphenylacetaldehyde + H2O2 + NH4(+). The catalysed reaction is tyramine + O2 + H2O = (4-hydroxyphenyl)acetaldehyde + H2O2 + NH4(+). The enzyme catalyses (R)-noradrenaline + O2 + H2O = (R)-3,4-dihydroxymandelaldehyde + H2O2 + NH4(+). It carries out the reaction 2-phenylethylamine + O2 + H2O = 2-phenylacetaldehyde + H2O2 + NH4(+). It catalyses the reaction N-acetylputrescine + O2 + H2O = 4-acetamidobutanal + H2O2 + NH4(+). Functionally, catalyzes the oxidative deamination of primary and some secondary amines such as neurotransmitters, and exogenous amines including the tertiary amine, neurotoxin 1-methyl-4-phenyl-1,2,3,6-tetrahydropyridine (MPTP), with concomitant reduction of oxygen to hydrogen peroxide and participates in the metabolism of neuroactive and vasoactive amines in the central nervous system and peripheral tissues. Preferentially degrades benzylamine and phenylethylamine. This Sus scrofa (Pig) protein is Amine oxidase [flavin-containing] B.